The following is a 441-amino-acid chain: MRISSTLLQRSKQLIDKYALYVPKTGSFPKGFEVGYTASGVKKNGSLDLGVILNTNKSRPSTAAAVFTTNKFKAAPVLTSKKVLETARGKNINAIVVNSGCANSVTGDLGMKDAQVMIDLVNDKIGQKNSTLVMSTGVIGQRLQMDKISTGINKIFGEEKFGSDFNSWLNVAKSICTTDTFPKLVTSRFKLPSGTEYTLTGMAKGAGMICPNMATLLGFIVTDLPIESKALQKMLTFATTRSFNCISVDGDMSTNDTICMLANGAIDTKEINEDSKDFEQVKLQVTEFAQRLAQLVVRDGEGSTKFVTVNVKNALHFEDAKIIAESISNSMLVKTALYGQDANWGRILCAIGYAKLNDLKSLDVNKINVSFIATDNSEPRELKLVANGVPQLEIDETRASEILALNDLEVSVDLGTGDQAAQFWTCDLSHEYVTINGDYRS.

The N-terminal 8 residues, 1-8, are a transit peptide targeting the mitochondrion; it reads MRISSTLL. Thr-177, Lys-204, Thr-215, Glu-301, Asn-436, and Ser-441 together coordinate substrate. Catalysis depends on Thr-215, which acts as the Nucleophile.

It belongs to the ArgJ family. As to quaternary structure, heterodimer of an alpha and a beta chain. The alpha and beta chains are autoproteolytically processed from a single precursor protein within the mitochondrion.

It localises to the mitochondrion matrix. It carries out the reaction N(2)-acetyl-L-ornithine + L-glutamate = N-acetyl-L-glutamate + L-ornithine. The enzyme catalyses L-glutamate + acetyl-CoA = N-acetyl-L-glutamate + CoA + H(+). The protein operates within amino-acid biosynthesis; L-arginine biosynthesis; L-ornithine and N-acetyl-L-glutamate from L-glutamate and N(2)-acetyl-L-ornithine (cyclic): step 1/1. It functions in the pathway amino-acid biosynthesis; L-arginine biosynthesis; N(2)-acetyl-L-ornithine from L-glutamate: step 1/4. With respect to regulation, inhibited by ornithine. In terms of biological role, catalyzes two activities which are involved in the cyclic version of arginine biosynthesis: the synthesis of acetylglutamate from glutamate and acetyl-CoA, and of ornithine by transacetylation between acetylornithine and glutamate. This is Arginine biosynthesis bifunctional protein ArgJ, mitochondrial from Saccharomyces cerevisiae (strain ATCC 204508 / S288c) (Baker's yeast).